The chain runs to 210 residues: 3,4-dihydroxy-2-butanone 4-phosphate synthase (210 aa).

D-ribulose 5-phosphate-binding positions include 33–34 (RE), Asp38, 146–150 (RRGHT), and Glu170. Mg(2+) is bound at residue Glu34. His149 lines the Mg(2+) pocket.

Belongs to the DHBP synthase family. In terms of assembly, homodimer. It depends on Mg(2+) as a cofactor. Mn(2+) is required as a cofactor.

It catalyses the reaction D-ribulose 5-phosphate = (2S)-2-hydroxy-3-oxobutyl phosphate + formate + H(+). The protein operates within cofactor biosynthesis; riboflavin biosynthesis; 2-hydroxy-3-oxobutyl phosphate from D-ribulose 5-phosphate: step 1/1. Functionally, catalyzes the conversion of D-ribulose 5-phosphate to formate and 3,4-dihydroxy-2-butanone 4-phosphate. This Chromobacterium violaceum (strain ATCC 12472 / DSM 30191 / JCM 1249 / CCUG 213 / NBRC 12614 / NCIMB 9131 / NCTC 9757 / MK) protein is 3,4-dihydroxy-2-butanone 4-phosphate synthase.